We begin with the raw amino-acid sequence, 228 residues long: Phosphoribosylformylglycinamidine synthase subunit PurQ (228 aa).

In terms of domain architecture, Glutamine amidotransferase type-1 spans 3–226; the sequence is FAVIVFPGSN…VNYWRETHVV (224 aa). C86 functions as the Nucleophile in the catalytic mechanism. Catalysis depends on residues H195 and E197.

Part of the FGAM synthase complex composed of 1 PurL, 1 PurQ and 2 PurS subunits.

It localises to the cytoplasm. The enzyme catalyses N(2)-formyl-N(1)-(5-phospho-beta-D-ribosyl)glycinamide + L-glutamine + ATP + H2O = 2-formamido-N(1)-(5-O-phospho-beta-D-ribosyl)acetamidine + L-glutamate + ADP + phosphate + H(+). The catalysed reaction is L-glutamine + H2O = L-glutamate + NH4(+). It functions in the pathway purine metabolism; IMP biosynthesis via de novo pathway; 5-amino-1-(5-phospho-D-ribosyl)imidazole from N(2)-formyl-N(1)-(5-phospho-D-ribosyl)glycinamide: step 1/2. Its function is as follows. Part of the phosphoribosylformylglycinamidine synthase complex involved in the purines biosynthetic pathway. Catalyzes the ATP-dependent conversion of formylglycinamide ribonucleotide (FGAR) and glutamine to yield formylglycinamidine ribonucleotide (FGAM) and glutamate. The FGAM synthase complex is composed of three subunits. PurQ produces an ammonia molecule by converting glutamine to glutamate. PurL transfers the ammonia molecule to FGAR to form FGAM in an ATP-dependent manner. PurS interacts with PurQ and PurL and is thought to assist in the transfer of the ammonia molecule from PurQ to PurL. This Geobacillus thermodenitrificans (strain NG80-2) protein is Phosphoribosylformylglycinamidine synthase subunit PurQ.